Reading from the N-terminus, the 426-residue chain is Pyruvate, phosphate dikinase regulatory protein, chloroplastic (426 aa).

The N-terminal 41 residues, 1–41 (MIGCAKPLAAPLQAWARPPSPAGRRLPPSFCAPDTSPALTR), are a transit peptide targeting the chloroplast. 2 disordered regions span residues 1–76 (MIGC…HLDR) and 94–124 (AALSSASVSAPPVIKSPRPEDAAVAAEDGED). Positions 94 to 119 (AALSSASVSAPPVIKSPRPEDAAVAA) are enriched in low complexity. 153–160 (HSVNAALG) serves as a coordination point for ADP.

It belongs to the pyruvate, phosphate/water dikinase regulatory protein family. PDRP subfamily. In terms of assembly, homodimer at pH 7.5 and homotetramer at pH 8.3. Mg(2+) is required as a cofactor. As to expression, leaf mesophyll-cells.

The protein resides in the plastid. The protein localises to the chloroplast stroma. The enzyme catalyses N(tele)-phospho-L-histidyl/L-threonyl-[pyruvate, phosphate dikinase] + ADP = N(tele)-phospho-L-histidyl/O-phospho-L-threonyl-[pyruvate, phosphate dikinase] + AMP + H(+). It carries out the reaction N(tele)-phospho-L-histidyl/O-phospho-L-threonyl-[pyruvate, phosphate dikinase] + phosphate + H(+) = N(tele)-phospho-L-histidyl/L-threonyl-[pyruvate, phosphate dikinase] + diphosphate. Its pathway is photosynthesis; C4 acid pathway. Its activity is regulated as follows. Regulated by light/dark exposure. Functionally, bifunctional serine/threonine kinase and phosphorylase involved in the dark/light-mediated regulation of PPDK by catalyzing its phosphorylation/dephosphorylation. Dark/light-induced changes in stromal concentrations of the competing ADP and Pi substrates govern the direction of the reaction. In the dark, phosphorylates the catalytic intermediate of PPDK (PPDK-HisP), inactivating it. Light exposure induces the phosphorolysis reaction that reactivates PPDK. Phosphorylates PPDK at both Ser-528 and Thr-527. Can use ADP as a high specificity substrate and GDP as a lower affinity substrate, but has no activity with UDP. The protein is Pyruvate, phosphate dikinase regulatory protein, chloroplastic (PDRP1) of Zea mays (Maize).